The primary structure comprises 220 residues: Putative cobalt transport protein CbiM (220 aa).

6 helical membrane passes run 6–26, 45–65, 74–94, 107–127, 153–173, and 188–208; these read GFLP…VISY, IAVA…SVTG, GIAV…IVLL, TLGA…WVVF, LVTS…AGVV, and IPIG…IAMS.

It belongs to the CbiM family. In terms of assembly, forms an energy-coupling factor (ECF) transporter complex composed of an ATP-binding protein (A component, CbiO), a transmembrane protein (T component, CbiQ) and 2 possible substrate-capture proteins (S components, CbiM and CbiN) of unknown stoichimetry.

It is found in the cell membrane. It functions in the pathway cofactor biosynthesis; adenosylcobalamin biosynthesis. Part of the energy-coupling factor (ECF) transporter complex CbiMNOQ involved in cobalt import. The sequence is that of Putative cobalt transport protein CbiM from Halobacterium salinarum (strain ATCC 29341 / DSM 671 / R1).